Here is a 235-residue protein sequence, read N- to C-terminus: Uridylate kinase (235 aa).

An ATP-binding site is contributed by 10 to 13; the sequence is KLSG. Gly52 is a binding site for UMP. Residues Gly53 and Arg57 each contribute to the ATP site. UMP is bound by residues Asp72 and 133 to 140; that span reads TSNPYFST. Positions 160, 166, and 169 each coordinate ATP.

It belongs to the UMP kinase family. In terms of assembly, homohexamer.

Its subcellular location is the cytoplasm. The catalysed reaction is UMP + ATP = UDP + ADP. It functions in the pathway pyrimidine metabolism; CTP biosynthesis via de novo pathway; UDP from UMP (UMPK route): step 1/1. Its activity is regulated as follows. Inhibited by UTP. Functionally, catalyzes the reversible phosphorylation of UMP to UDP. This chain is Uridylate kinase, found in Solibacter usitatus (strain Ellin6076).